A 154-amino-acid polypeptide reads, in one-letter code: 6,7-dimethyl-8-ribityllumazine synthase (154 aa).

5-amino-6-(D-ribitylamino)uracil is bound by residues Phe22, 56-58 (AFE), and 80-82 (AVI). A (2S)-2-hydroxy-3-oxobutyl phosphate-binding site is contributed by 85–86 (AT). The active-site Proton donor is His88. 5-amino-6-(D-ribitylamino)uracil is bound at residue Phe113. (2S)-2-hydroxy-3-oxobutyl phosphate is bound at residue Arg127.

Belongs to the DMRL synthase family.

The enzyme catalyses (2S)-2-hydroxy-3-oxobutyl phosphate + 5-amino-6-(D-ribitylamino)uracil = 6,7-dimethyl-8-(1-D-ribityl)lumazine + phosphate + 2 H2O + H(+). Its pathway is cofactor biosynthesis; riboflavin biosynthesis; riboflavin from 2-hydroxy-3-oxobutyl phosphate and 5-amino-6-(D-ribitylamino)uracil: step 1/2. Functionally, catalyzes the formation of 6,7-dimethyl-8-ribityllumazine by condensation of 5-amino-6-(D-ribitylamino)uracil with 3,4-dihydroxy-2-butanone 4-phosphate. This is the penultimate step in the biosynthesis of riboflavin. In Agathobacter rectalis (strain ATCC 33656 / DSM 3377 / JCM 17463 / KCTC 5835 / VPI 0990) (Eubacterium rectale), this protein is 6,7-dimethyl-8-ribityllumazine synthase.